The following is a 410-amino-acid chain: WD repeat-containing protein jip5 (410 aa).

6 WD repeats span residues P9–H48, R74–K113, A119–A160, V223–E264, G273–E316, and D320–E357. Positions P41–H65 are disordered. Residues E43–Q53 show a composition bias toward acidic residues. The interval I354–D410 is disordered. Positions D364–D376 are enriched in acidic residues. A compositionally biased stretch (basic and acidic residues) spans H377–R386.

It belongs to the WD repeat WDR55 family.

It localises to the nucleus. The protein resides in the nucleolus. The polypeptide is WD repeat-containing protein jip5 (jip5) (Emericella nidulans (strain FGSC A4 / ATCC 38163 / CBS 112.46 / NRRL 194 / M139) (Aspergillus nidulans)).